The sequence spans 476 residues: tRNA(Ile)-lysidine synthase (476 aa).

25-30 (SGGPDS) is a binding site for ATP.

The protein belongs to the tRNA(Ile)-lysidine synthase family.

It is found in the cytoplasm. The catalysed reaction is cytidine(34) in tRNA(Ile2) + L-lysine + ATP = lysidine(34) in tRNA(Ile2) + AMP + diphosphate + H(+). Its function is as follows. Ligates lysine onto the cytidine present at position 34 of the AUA codon-specific tRNA(Ile) that contains the anticodon CAU, in an ATP-dependent manner. Cytidine is converted to lysidine, thus changing the amino acid specificity of the tRNA from methionine to isoleucine. The protein is tRNA(Ile)-lysidine synthase of Bacillus licheniformis (strain ATCC 14580 / DSM 13 / JCM 2505 / CCUG 7422 / NBRC 12200 / NCIMB 9375 / NCTC 10341 / NRRL NRS-1264 / Gibson 46).